Consider the following 190-residue polypeptide: MNPQIRNPMKAMYPGTFYFQFKNLWEANDRNETWLCFTVEGIKRRSVVSWKTGVFRNQVDSETHCHAERCFLSWFCDDILSPNTKYQVTWYTSWSPCPDCAGEVAEFLARHSNVNLTIFTARLYYFQYPCYQEGLRSLSQEGVAVEIMDYEDFKYCWENFVYNDNEPFKPWKGLKTNFRLLKRRLRESLQ.

Positions 29 to 138 constitute a CMP/dCMP-type deaminase domain; it reads DRNETWLCFT…PCYQEGLRSL (110 aa). Positions 40 to 86 are (Microbial infection) Required for interaction with human foamy virus protein Bet; that stretch reads EGIKRRSVVSWKTGVFRNQVDSETHCHAERCFLSWFCDDILSPNTKY. H66 contributes to the Zn(2+) binding site. E68 (proton donor) is an active-site residue. Residues C97 and C100 each contribute to the Zn(2+) site.

It belongs to the cytidine and deoxycytidylate deaminase family. In terms of assembly, homodimer. Interacts with TRIB3. Interacts with AGO2. As to quaternary structure, (Microbial infection) Interacts with human foamy virus protein Bet; this interaction does not induce APOBEC3C degradation but prevents its dimerization and incorporation into the virion by binding of Bet close to or within the APOBEC3C dimerization site. (Microbial infection) Interacts with HIV-1 Vif. Zn(2+) is required as a cofactor. Expressed in spleen, testes, peripherical blood lymphocytes, heart, thymus, prostate and ovary.

It localises to the nucleus. It is found in the cytoplasm. It carries out the reaction a 2'-deoxycytidine in single-stranded DNA + H2O + H(+) = a 2'-deoxyuridine in single-stranded DNA + NH4(+). (Microbial infection) Antiviral activity is neutralized by the HIV-1 virion infectivity factor (Vif), that prevents its incorporation into progeny HIV-1 virions by both inhibiting its translation and/or by inducing its ubiquitination and subsequent degradation by the 26S proteasome. Functionally, DNA deaminase (cytidine deaminase) which acts as an inhibitor of retrovirus replication and retrotransposon mobility via deaminase-dependent and -independent mechanisms. After the penetration of retroviral nucleocapsids into target cells of infection and the initiation of reverse transcription, it can induce the conversion of cytosine to uracil in the minus-sense single-strand viral DNA, leading to G-to-A hypermutations in the subsequent plus-strand viral DNA. The resultant detrimental levels of mutations in the proviral genome, along with a deamination-independent mechanism that works prior to the proviral integration, together exert efficient antiretroviral effects in infected target cells. Selectively targets single-stranded DNA and does not deaminate double-stranded DNA or single- or double-stranded RNA. Exhibits antiviral activity against simian immunodeficiency virus (SIV), hepatitis B virus (HBV), herpes simplex virus 1 (HHV-1) and Epstein-Barr virus (EBV) and may inhibit the mobility of LTR and non-LTR retrotransposons. May also play a role in the epigenetic regulation of gene expression through the process of active DNA demethylation. This Homo sapiens (Human) protein is DNA dC-&gt;dU-editing enzyme APOBEC-3C (APOBEC3C).